A 252-amino-acid chain; its full sequence is MHFRVVIPARYGSSRLPGKPLADIGGRPMVLHVLDRALQAGAESVVVATDDARVQAAVEAAGHQALLTSPDHQSGTERLVEVAETLGWPDDTLVVNVQGDEPLIDPALIREAARQLVVHTDAVMATLAHPIHDHADFVNPNVVKVVADEAGYAVYFSRAPIPWPRDAFAAEQPMPHEIGALRHIGLYAYRAGFLRTYASLASSPLERCEMLEQLRVLWHGYRISLGVTPTAPAPGVDTADDLARVRALFAAV.

The protein belongs to the KdsB family.

It localises to the cytoplasm. The catalysed reaction is 3-deoxy-alpha-D-manno-oct-2-ulosonate + CTP = CMP-3-deoxy-beta-D-manno-octulosonate + diphosphate. Its pathway is nucleotide-sugar biosynthesis; CMP-3-deoxy-D-manno-octulosonate biosynthesis; CMP-3-deoxy-D-manno-octulosonate from 3-deoxy-D-manno-octulosonate and CTP: step 1/1. It participates in bacterial outer membrane biogenesis; lipopolysaccharide biosynthesis. Its function is as follows. Activates KDO (a required 8-carbon sugar) for incorporation into bacterial lipopolysaccharide in Gram-negative bacteria. In Thiobacillus denitrificans (strain ATCC 25259 / T1), this protein is 3-deoxy-manno-octulosonate cytidylyltransferase.